Here is a 328-residue protein sequence, read N- to C-terminus: Alanine racemase (328 aa).

Lys-33 (proton acceptor; specific for D-alanine) is an active-site residue. Position 33 is an N6-(pyridoxal phosphate)lysine (Lys-33). Arg-118 provides a ligand contact to substrate. Tyr-237 (proton acceptor; specific for L-alanine) is an active-site residue. Met-283 serves as a coordination point for substrate.

The protein belongs to the alanine racemase family. Requires pyridoxal 5'-phosphate as cofactor.

The enzyme catalyses L-alanine = D-alanine. The protein operates within amino-acid biosynthesis; D-alanine biosynthesis; D-alanine from L-alanine: step 1/1. In terms of biological role, catalyzes the interconversion of L-alanine and D-alanine. May also act on other amino acids. This is Alanine racemase (alr) from Campylobacter jejuni (strain RM1221).